The chain runs to 218 residues: N-(5'-phosphoribosyl)anthranilate isomerase (218 aa).

This sequence belongs to the TrpF family.

It carries out the reaction N-(5-phospho-beta-D-ribosyl)anthranilate = 1-(2-carboxyphenylamino)-1-deoxy-D-ribulose 5-phosphate. Its pathway is amino-acid biosynthesis; L-tryptophan biosynthesis; L-tryptophan from chorismate: step 3/5. This Alcanivorax borkumensis (strain ATCC 700651 / DSM 11573 / NCIMB 13689 / SK2) protein is N-(5'-phosphoribosyl)anthranilate isomerase.